Here is a 615-residue protein sequence, read N- to C-terminus: Homologous recombination OB-fold protein (615 aa).

3 disordered regions span residues 42 to 75 (LRPV…PRLC), 213 to 326 (PWPS…PVTQ), and 546 to 590 (DFLE…FPEE). S47 bears the Phosphoserine mark. 3 stretches are compositionally biased toward polar residues: residues 47–71 (SRPQ…NQSV), 232–241 (SCVSTSQQRG), and 257–275 (IRSS…SPRA). A compositionally biased stretch (low complexity) spans 302 to 317 (SSRAPVSSVESPVSTP).

As to quaternary structure, interacts with MCM8; this interaction is necessary for MCM8-MCM9 helicase complex recruitment to DNA damage sites. Interacts with RPA1; this interaction associates HROB with the RPA complex.

The protein resides in the nucleus. It is found in the chromosome. In terms of biological role, DNA-binding protein involved in homologous recombination that acts by recruiting the MCM8-MCM9 helicase complex to sites of DNA damage to promote DNA repair synthesis. This Mus musculus (Mouse) protein is Homologous recombination OB-fold protein.